A 294-amino-acid polypeptide reads, in one-letter code: 33 kDa chaperonin (294 aa).

Cystine bridges form between C237–C239 and C270–C273.

It belongs to the HSP33 family. Post-translationally, under oxidizing conditions two disulfide bonds are formed involving the reactive cysteines. Under reducing conditions zinc is bound to the reactive cysteines and the protein is inactive.

The protein localises to the cytoplasm. In terms of biological role, redox regulated molecular chaperone. Protects both thermally unfolding and oxidatively damaged proteins from irreversible aggregation. Plays an important role in the bacterial defense system toward oxidative stress. This is 33 kDa chaperonin from Geobacillus kaustophilus (strain HTA426).